Here is a 473-residue protein sequence, read N- to C-terminus: H(+)/Cl(-) exchange transporter ClcA (473 aa).

Residues 1 to 32 lie on the Cytoplasmic side of the membrane; it reads MKTDTSTFLAQQIVRLRRRDQIRRLMQRDKTP. The chain crosses the membrane as a helical span at residues 33-69; that stretch reads LAILFMAAVVGTLTGLVGVAFEKAVSWVQNMRIGALV. The Periplasmic segment spans residues 70 to 76; the sequence is QVADHAF. The helical transmembrane segment at 77–100 threads the bilayer; that stretch reads LLWPLAFILSALLAMVGYFLVRKF. The Selectivity filter part_1 motif lies at 106–110; sequence GSGIP. Chloride is bound at residue serine 107. Positions 109 to 116 form an intramembrane region, helical; the sequence is IPEIEGAL. Residues 117-123 lie on the Cytoplasmic side of the membrane; sequence EELRPVR. Transmembrane regions (helical) follow at residues 124–141 and 148–166; these read WWRVLPVKFIGGMGTLGA and EGPTVQIGGNLGRMVLDVF. Positions 146-150 match the Selectivity filter part_2 motif; the sequence is GREGP. The Cytoplasmic portion of the chain corresponds to 167–176; sequence RMRSAEARHT. 2 intramembrane regions (helical) span residues 177–189 and 193–201; these read LLATGAAAGLSAA and PLAGILFII. The Cytoplasmic portion of the chain corresponds to 202–214; that stretch reads EEMRPQFRYNLIS. A helical membrane pass occupies residues 215-232; that stretch reads IKAVFTGVIMSSIVFRIF. Over 233–252 the chain is Periplasmic; the sequence is NGEAPIIEVGKLSDAPVNTL. A helical membrane pass occupies residues 253–281; it reads WLYLILGIIFGCVGPVFNSLVLRTQDMFQ. The Cytoplasmic segment spans residues 282-287; that stretch reads RFHGGE. A helical transmembrane segment spans residues 288–309; it reads IKKWVLMGGAIGGLCGILGLIE. Over 310–329 the chain is Periplasmic; the sequence is PEAAGGGFNLIPIAAAGNFS. A run of 2 helical transmembrane segments spans residues 330–349 and 355–376; these read VGLLLFIFIARVVTTLLCFS and GIFAPMLALGTLLGTAFGMAAA. The short motif at 355 to 359 is the Selectivity filter part_3 element; the sequence is GIFAP. 2 residues coordinate chloride: isoleucine 356 and phenylalanine 357. Residues 377–386 lie on the Periplasmic side of the membrane; sequence VLFPQYHLEA. The segment at residues 387-401 is an intramembrane region (helical); sequence GTFAIAGMGALMAAS. The note=Loop between two helices intramembrane region spans 402–404; the sequence is VRA. The segment at residues 405 to 416 is an intramembrane region (helical); that stretch reads PLTGIVLVLEMT. Residues 417–421 constitute an intramembrane region (note=Loop between two helices); sequence DNYQL. The chain crosses the membrane as a helical span at residues 422-438; it reads ILPMIITCLGATLLAQF. Over 439 to 473 the chain is Cytoplasmic; it reads LGGKPLYSTILARTLAKQDAEQAAKSQNAPAGENT. Tyrosine 445 serves as a coordination point for chloride.

The protein belongs to the chloride channel (TC 2.A.49) family. ClcA subfamily. Homodimer.

The protein resides in the cell inner membrane. The catalysed reaction is 2 chloride(in) + H(+)(out) = 2 chloride(out) + H(+)(in). In terms of biological role, proton-coupled chloride transporter. Functions as antiport system and exchanges two chloride ions for 1 proton. Probably acts as an electrical shunt for an outwardly-directed proton pump that is linked to amino acid decarboxylation, as part of the extreme acid resistance (XAR) response. This Salmonella gallinarum (strain 287/91 / NCTC 13346) protein is H(+)/Cl(-) exchange transporter ClcA.